A 54-amino-acid polypeptide reads, in one-letter code: UPF0391 membrane protein PFL_0093 (54 aa).

2 helical membrane passes run 4–24 (WAITFLIIAIVAAVLGFGGIA) and 29–49 (GIAKILFVVFLVMFIASFFFG).

This sequence belongs to the UPF0391 family.

The protein resides in the cell membrane. This is UPF0391 membrane protein PFL_0093 from Pseudomonas fluorescens (strain ATCC BAA-477 / NRRL B-23932 / Pf-5).